The chain runs to 676 residues: Envelope glycoprotein (676 aa).

Positions 1–32 (MGASGILQLPRERFRKTSFFVWVIILFHKVFS) are cleaved as a signal peptide. The Extracellular segment spans residues 33–650 (IPLGVVHNNT…GSNWWTGWKQ (618 aa)). An N-linked (GlcNAc...) asparagine; by host glycan is attached at N40. 5 cysteine pairs are disulfide-bonded: C53-C609, C108-C135, C121-C147, C511-C556, and C601-C608. The tract at residues 54–201 (RDKLSSTSQL…DFFQSPPLHE (148 aa)) is receptor-binding. N-linked (GlcNAc...) asparagine; by host glycosylation is found at N204, N228, N257, N268, and N296. Residues 305–485 (ELSFVPVPET…LSGPGFLTNT (181 aa)) form a mucin-like region region. Positions 356–463 (IKGKDTMPTT…PTTLPEQHTA (108 aa)) are disordered. Residues 361–374 (TMPTTVTGVPTTTP) show a composition bias toward low complexity. Positions 402–422 (TTQPAKTTSQPTNSTESTTLN) are enriched in polar residues. N414 carries N-linked (GlcNAc...) asparagine; by host glycosylation. Over residues 423–440 (PTSEPSSRGTGPSSPTVP) the composition is skewed to low complexity. N441 carries N-linked (GlcNAc...) asparagine; by host glycosylation. Positions 452–463 (TTPTTLPEQHTA) are enriched in polar residues. The tract at residues 524 to 539 (GAAIGLAWIPYFGPAA) is fusion peptide. Residues 554-595 (LICGLRQLANETTQALQLFLRATTELRTFSILNRKAIDFLLQ) adopt a coiled-coil conformation. N-linked (GlcNAc...) asparagine; by host glycosylation is present at N563. A coiled-coil region spans residues 615 to 634 (WTKNITDKIDQIIHDFVDNN). N618 carries an N-linked (GlcNAc...) asparagine; by host glycan. Residues 651-671 (WVPAGIGITGVIIAIIALLCI) form a helical membrane-spanning segment. S-palmitoyl cysteine; by host attachment occurs at residues C670 and C672. At 672–676 (CKFML) the chain is on the cytoplasmic side.

It belongs to the filoviruses glycoprotein family. Homotrimer; each monomer consists of a GP1 and a GP2 subunit linked by disulfide bonds. The resulting peplomers (GP1,2) protrude from the virus surface as spikes. GP1 and GP2delta are part of GP1,2delta soluble complexes released by ectodomain shedding. GP1,2 interacts with host integrin ITGAV/alpha-V and CLEC10A. Also binds human CD209 and CLEC4M (collectively referred to as DC-SIGN(R)), as well as human FOLR1. Interacts with host entry receptor NPC1. The signal peptide region modulates GP's high mannose glycosylation, thereby determining the efficiency of the interactions with DC-SIGN(R). Post-translationally, N-glycosylated. In terms of processing, O-glycosylated in the mucin-like region. Palmitoylation of GP2 is not required for its function. Post-translationally, specific enzymatic cleavages in vivo yield mature proteins. The precursor is processed into GP1 and GP2 by host cell furin in the trans Golgi, and maybe by other host proteases, to yield the mature GP1 and GP2 proteins. The cleavage site corresponds to the furin optimal cleavage sequence [KR]-X-[KR]-R. This cleavage does not seem to be required for function. After the internalization of the virus into cell endosomes, GP1 C-terminus is removed by the endosomal proteases cathepsin B, cathepsin L, or both, leaving a 19-kDa N-terminal fragment which is further digested by cathepsin B. Proteolytic processing of GP1,2 by host ADAM17 can remove the transmembrane anchor of GP2 and leads to shedding of complexes consisting in GP1 and truncated GP2 (GP1,2delta).

It localises to the virion membrane. Its subcellular location is the host cell membrane. The protein resides in the secreted. GP1 is responsible for binding to the receptor(s) on target cells. Interacts with CD209/DC-SIGN and CLEC4M/DC-SIGNR which act as cofactors for virus entry into the host cell. Binding to CD209 and CLEC4M, which are respectively found on dendritic cells (DCs), and on endothelial cells of liver sinusoids and lymph node sinuses, facilitate infection of macrophages and endothelial cells. These interactions not only facilitate virus cell entry, but also allow capture of viral particles by DCs and subsequent transmission to susceptible cells without DCs infection (trans infection). Binding to the macrophage specific lectin CLEC10A also seems to enhance virus infectivity. Interaction with FOLR1/folate receptor alpha may be a cofactor for virus entry in some cell types, although results are contradictory. Members of the Tyro3 receptor tyrosine kinase family also seem to be cell entry factors in filovirus infection. Once attached, the virions are internalized through clathrin-dependent endocytosis and/or macropinocytosis. After internalization of the virus into the endosomes of the host cell, proteolysis of GP1 by two cysteine proteases, CTSB/cathepsin B and CTSL/cathepsin L presumably induces a conformational change of GP2, unmasking its fusion peptide and initiating membranes fusion. Its function is as follows. GP2 acts as a class I viral fusion protein. Under the current model, the protein has at least 3 conformational states: pre-fusion native state, pre-hairpin intermediate state, and post-fusion hairpin state. During viral and target cell membrane fusion, the coiled coil regions (heptad repeats) assume a trimer-of-hairpins structure, positioning the fusion peptide in close proximity to the C-terminal region of the ectodomain. The formation of this structure appears to drive apposition and subsequent fusion of viral and target cell membranes. Responsible for penetration of the virus into the cell cytoplasm by mediating the fusion of the membrane of the endocytosed virus particle with the endosomal membrane. Low pH in endosomes induces an irreversible conformational change in GP2, releasing the fusion hydrophobic peptide. Functionally, GP1,2 which is the disulfid-linked complex of GP1 and GP2, mediates endothelial cell activation and decreases endothelial barrier function. Mediates activation of primary macrophages. At terminal stages of the viral infection, when its expression is high, GP1,2 down-modulates the expression of various host cell surface molecules that are essential for immune surveillance and cell adhesion. Down-modulates integrins ITGA1, ITGA2, ITGA3, ITGA4, ITGA5, ITGA6, ITGAV and ITGB1. GP1,2 alters the cellular recycling of the dimer alpha-V/beta-3 via a dynamin-dependent pathway. Decrease in the host cell surface expression of various adhesion molecules may lead to cell detachment, contributing to the disruption of blood vessel integrity and hemorrhages developed during Ebola virus infection (cytotoxicity). This cytotoxicity appears late in the infection, only after the massive release of viral particles by infected cells. Down-modulation of host MHC-I, leading to altered recognition by immune cells, may explain the immune suppression and inflammatory dysfunction linked to Ebola infection. Also down-modulates EGFR surface expression. Counteracts the antiviral effect of host tetherin. In terms of biological role, GP2delta is part of the complex GP1,2delta released by host ADAM17 metalloprotease. This secreted complex may play a role in the pathogenesis of the virus by efficiently blocking the neutralizing antibodies that would otherwise neutralize the virus surface glycoproteins GP1,2. Might therefore contribute to the lack of inflammatory reaction seen during infection in spite the of extensive necrosis and massive virus production. GP1,2delta does not seem to be involved in activation of primary macrophages. This chain is Envelope glycoprotein (GP), found in Tai Forest ebolavirus (strain Cote d'Ivoire-94) (TAFV).